The following is a 100-amino-acid chain: Large ribosomal subunit protein uL23 (100 aa).

The protein belongs to the universal ribosomal protein uL23 family. In terms of assembly, part of the 50S ribosomal subunit. Contacts protein L29, and trigger factor when it is bound to the ribosome.

Its function is as follows. One of the early assembly proteins it binds 23S rRNA. One of the proteins that surrounds the polypeptide exit tunnel on the outside of the ribosome. Forms the main docking site for trigger factor binding to the ribosome. This chain is Large ribosomal subunit protein uL23, found in Mycobacterium marinum (strain ATCC BAA-535 / M).